Reading from the N-terminus, the 181-residue chain is SAGA-associated factor 11 (181 aa).

The SGF11-type zinc finger occupies 93 to 114 (FNCMNCGRQIVAGRFAPHLEKC). Residues 116 to 125 (GKGRKARAKT) are compositionally biased toward basic residues. Residues 116 to 181 (GKGRKARAKT…FTVRENVKGD (66 aa)) form a disordered region. Low complexity predominate over residues 126–153 (TRSTTAAQNRNARRSPNPRYSPYPNSAS).

This sequence belongs to the SGF11 family. Component of a deubiquitination module (DUB module) formed by ENY2, SGF11, and UBP22 in Arabidopsis. Interacts directly with ENY2 and UBP22. Interacts with DDA1. In terms of processing, ubiquitinated in DET1-dependent manner. Ubiquitination probably leads to its subsequent proteasomal degradation.

It localises to the nucleus. It is found in the nucleoplasm. Its function is as follows. Component of a deubiquitination module (DUB module) that specifically deubiquinates monoubiquinated histone H2B (H2Bub). Does not seem to be a component of the TREX-2 complex. Seems to act independently of the SAGA multiprotein complex. The DUB module is responsible for the major H2Bub deubiquitinase activity in Arabidopsis. This chain is SAGA-associated factor 11, found in Arabidopsis thaliana (Mouse-ear cress).